We begin with the raw amino-acid sequence, 168 residues long: Mediator of RNA polymerase II transcription subunit 31 (168 aa).

A compositionally biased stretch (acidic residues) spans 113–159 (EGEDQDVEESEEETVENEQKESEDEEDVVIVEKPEDEQEEQAEEAAE). The segment at 113-168 (EGEDQDVEESEEETVENEQKESEDEEDVVIVEKPEDEQEEQAEEAAEPTDTSLLNT) is disordered.

The protein belongs to the Mediator complex subunit 31 family. In terms of assembly, component of the Mediator complex.

It is found in the nucleus. Its function is as follows. Component of the Mediator complex, a coactivator involved in the regulated transcription of nearly all RNA polymerase II-dependent genes. Mediator functions as a bridge to convey information from gene-specific regulatory proteins to the basal RNA polymerase II transcription machinery. Mediator is recruited to promoters by direct interactions with regulatory proteins and serves as a scaffold for the assembly of a functional preinitiation complex with RNA polymerase II and the general transcription factors. This is Mediator of RNA polymerase II transcription subunit 31 (mdt-31) from Caenorhabditis briggsae.